We begin with the raw amino-acid sequence, 792 residues long: Protein SEY1 homolog 2 (792 aa).

Residues 1 to 638 are Cytoplasmic-facing; it reads MEQIITGDGA…NIKAQANREQ (638 aa). The 218-residue stretch at 28-245 folds into the GB1/RHD3-type G domain; sequence GVDYHTVAII…LKDYLFAEKS (218 aa). A GTP-binding site is contributed by 38 to 45; that stretch reads GPQSSGKS. Residues 639 to 659 traverse the membrane as a helical segment; that stretch reads IPGWAWLATFLCSSNYIMKLL. Topologically, residues 660 to 662 are lumenal; it reads ANP. Residues 663–683 form a helical membrane-spanning segment; that stretch reads IFFALAVIIGGIYSILRMLGL. The Cytoplasmic segment spans residues 684–792; it reads QDVAKKTLLD…LTRTQSLEFM (109 aa). Residues 691 to 718 are a coiled coil; it reads LLDKFNSLLKNLTKDENEQEKEGEENEE. Positions 703 to 792 are disordered; the sequence is TKDENEQEKE…LTRTQSLEFM (90 aa). Positions 707 to 723 are enriched in acidic residues; the sequence is NEQEKEGEENEEPEEDQ. Polar residues-rich tracts occupy residues 739-751 and 764-774; these read SVSQ…SIYK and IPQTSPLGNND.

This sequence belongs to the TRAFAC class dynamin-like GTPase superfamily. GB1/RHD3 GTPase family. RHD3 subfamily.

Its subcellular location is the endoplasmic reticulum membrane. Its function is as follows. Probable GTP-binding protein that may be involved in cell development. This chain is Protein SEY1 homolog 2, found in Trichomonas vaginalis (strain ATCC PRA-98 / G3).